Reading from the N-terminus, the 304-residue chain is Nod factor export ATP-binding protein I (304 aa).

Residues 6 to 236 (IDFQQVEKRY…EIGCDVIEIY (231 aa)) enclose the ABC transporter domain. 38–45 (GPNGAGKT) serves as a coordination point for ATP.

The protein belongs to the ABC transporter superfamily. Lipooligosaccharide exporter (TC 3.A.1.102) family. The complex is composed of two ATP-binding proteins (NodI) and two transmembrane proteins (NodJ).

The protein localises to the cell inner membrane. Its function is as follows. Part of the ABC transporter complex NodIJ involved in the export of the nodulation factors (Nod factors), the bacterial signal molecules that induce symbiosis and subsequent nodulation induction. Nod factors are LCO (lipo-chitin oligosaccharide), a modified beta-1,4-linked N-acetylglucosamine oligosaccharide. This subunit is responsible for energy coupling to the transport system. In Burkholderia pseudomallei (strain 1710b), this protein is Nod factor export ATP-binding protein I.